The primary structure comprises 383 residues: Chaperone protein DnaJ (383 aa).

The region spanning 5–70 is the J domain; the sequence is DYYKTLGVTQ…KKRTAYDQYG (66 aa). The CR-type zinc-finger motif lies at 137–215; sequence GTIKEIKIPT…CHGNGRIEIS (79 aa). Residues cysteine 150, cysteine 153, cysteine 167, cysteine 170, cysteine 189, cysteine 192, cysteine 203, and cysteine 206 each coordinate Zn(2+). 4 CXXCXGXG motif repeats span residues 150-157, 167-174, 189-196, and 203-210; these read CPTCYGYG, CPTCRGNG, CPQCHGEG, and CRRCHGNG.

Belongs to the DnaJ family. In terms of assembly, homodimer. It depends on Zn(2+) as a cofactor.

The protein localises to the cytoplasm. Participates actively in the response to hyperosmotic and heat shock by preventing the aggregation of stress-denatured proteins and by disaggregating proteins, also in an autonomous, DnaK-independent fashion. Unfolded proteins bind initially to DnaJ; upon interaction with the DnaJ-bound protein, DnaK hydrolyzes its bound ATP, resulting in the formation of a stable complex. GrpE releases ADP from DnaK; ATP binding to DnaK triggers the release of the substrate protein, thus completing the reaction cycle. Several rounds of ATP-dependent interactions between DnaJ, DnaK and GrpE are required for fully efficient folding. Also involved, together with DnaK and GrpE, in the DNA replication of plasmids through activation of initiation proteins. The sequence is that of Chaperone protein DnaJ from Buchnera aphidicola subsp. Baizongia pistaciae (strain Bp).